We begin with the raw amino-acid sequence, 250 residues long: mRNA-decapping protein g5R (250 aa).

The region spanning 97-239 is the Nudix hydrolase domain; that stretch reads QKFRKNWLLP…NLEPMIGPAF (143 aa). The Nudix box signature appears at 132–153; sequence GKPKEDESDLTCAIREFEEETG. Mg(2+) is bound at residue glutamate 138. Glutamate 147 functions as the Nucleophile in the catalytic mechanism. Mg(2+) contacts are provided by glutamate 151 and aspartate 173.

This sequence belongs to the Nudix hydrolase family. DIPP subfamily. Interacts with host RPL23A. Mg(2+) is required as a cofactor. The cofactor is Mn(2+).

It is found in the host rough endoplasmic reticulum. It catalyses the reaction diphospho-myo-inositol polyphosphate + H2O = myo-inositol polyphosphate + phosphate.. Functionally, decapping enzyme required for the removal of the 5'-end m7GpppN cap tethered to viral and host mRNAs to allow their decay in cells. May therefore accelerate viral and cellular mRNA turnover to eliminate competing host mRNAs and allow stage-specific synthesis of viral proteins. Acceleration of the turnover of cellular transcripts may even promote the shutoff of host protein synthesis. In addition to the mRNA cap, g5R also efficiently hydrolyzes diphosphoinositol polyphosphates. Down-regulation of the level of PP-InsP5 (diphosphoinositol pentakisphosphate) may play a role in viral manipulation of the cellular secretory pathway, a step necessary for the formation of virions. Binds viral and cellular poly(A) mRNAs, thereby decreasing both types of mRNAs. In Ornithodoros (relapsing fever ticks), this protein is mRNA-decapping protein g5R.